The chain runs to 142 residues: MGVGKPRGIRAGRKLARHRKDQRWADNDFNKRLLGSRWRNPFMGASHAKGLVTEKIGIESKQPNSAVRKCVRVLLRKNSKKIAAFVPMDGCLNFLAENDEVLVAGLGRQGHAVGDIPGVRFKVVCVKGISLLALFKGKKEKR.

The protein belongs to the universal ribosomal protein uS12 family.

This chain is Small ribosomal subunit protein uS12, found in Tetrahymena thermophila.